Consider the following 404-residue polypeptide: Multidrug resistance protein MdtH (404 aa).

Topologically, residues 1–12 (MSRVSQARNLGK) are cytoplasmic. Residues 13 to 33 (YFLLIDNMLVVLGFFVVFPLI) form a helical membrane-spanning segment. The Periplasmic segment spans residues 34-98 (SIRFVDQMGW…GFATMGIAHE (65 aa)). The chain crosses the membrane as a helical span at residues 99 to 116 (PWLLWFSCFLSGLGGTLF). At 117–138 (DPPRSALVVKLIRPEQRGRFFS) the chain is on the cytoplasmic side. A helical transmembrane segment spans residues 139–159 (LLMMQDSAGAVIGALLGSWLL). The Periplasmic segment spans residues 160 to 164 (QYDFR). Residues 165–185 (LVCAMGAILFIVCAIFNAWLL) traverse the membrane as a helical segment. Topologically, residues 186–213 (PAWKLSTVRTPVREGMRRVISDKRFVTY) are cytoplasmic. A helical membrane pass occupies residues 214-234 (VLTLAGYYMLAVQVMLMLPIM). Topologically, residues 235–243 (VNDVAGSPA) are periplasmic. A helical transmembrane segment spans residues 244–264 (AVKWMYAIEACLSLTLLYPIA). Residues 265-276 (RWSEKRFRLEHR) lie on the Cytoplasmic side of the membrane. The helical transmembrane segment at 277–297 (LMAGLLIMSLSMIPIGLAGNL) threads the bilayer. At 298–299 (QQ) the chain is on the periplasmic side. The chain crosses the membrane as a helical span at residues 300–320 (LFTLICAFYIGSVIAEPARET). Residues 321–339 (LSASLTDARARGSYMGFSR) are Cytoplasmic-facing. A helical transmembrane segment spans residues 340–360 (LGLAIGGAIGYIGGGWLFDMG). The Periplasmic portion of the chain corresponds to 361–367 (KTLAQPE). The chain crosses the membrane as a helical span at residues 368–388 (LPWMMLGIIGFITFLALGWQF). Topologically, residues 389–404 (SHKRTPRQYTGARRLI) are cytoplasmic.

It belongs to the major facilitator superfamily. DHA1 family. MdtH (TC 2.A.1.2.21) subfamily.

Its subcellular location is the cell inner membrane. The sequence is that of Multidrug resistance protein MdtH from Salmonella arizonae (strain ATCC BAA-731 / CDC346-86 / RSK2980).